The primary structure comprises 190 residues: Vascular endothelial growth factor A (190 aa).

The first 26 residues, Met-1–Ala-26, serve as a signal peptide directing secretion. 3 disulfide bridges follow: Cys-51-Cys-93, Cys-82-Cys-127, and Cys-86-Cys-129. A glycan (N-linked (GlcNAc...) asparagine) is linked at Asn-100.

It belongs to the PDGF/VEGF growth factor family. As to quaternary structure, homodimer; disulfide-linked. Also found as heterodimer with PGF. Interacts with NRP1. Interacts with isoform 2 of BSG. Interacts with CD82; this interaction inhibits VEGFA-mediated signaling pathway.

It is found in the secreted. Functionally, growth factor active in angiogenesis, vasculogenesis and endothelial cell growth. Induces endothelial cell proliferation, promotes cell migration, inhibits apoptosis and induces permeabilization of blood vessels. Binds to the FLT1/VEGFR1 and KDR/VEGFR2 receptors, heparan sulfate and heparin. Binding to NRP1 receptor initiates a signaling pathway needed for motor neuron axon guidance and cell body migration, including for the caudal migration of facial motor neurons from rhombomere 4 to rhombomere 6 during embryonic development. Also binds the DEAR/FBXW7-AS1 receptor. This Mesocricetus auratus (Golden hamster) protein is Vascular endothelial growth factor A (VEGFA).